Consider the following 144-residue polypeptide: Large ribosomal subunit protein uL11 (144 aa).

Belongs to the universal ribosomal protein uL11 family. Part of the ribosomal stalk of the 50S ribosomal subunit. Interacts with L10 and the large rRNA to form the base of the stalk. L10 forms an elongated spine to which L12 dimers bind in a sequential fashion forming a multimeric L10(L12)X complex. In terms of processing, one or more lysine residues are methylated.

Its function is as follows. Forms part of the ribosomal stalk which helps the ribosome interact with GTP-bound translation factors. The polypeptide is Large ribosomal subunit protein uL11 (Rickettsia bellii (strain OSU 85-389)).